Reading from the N-terminus, the 311-residue chain is Acetaldehyde dehydrogenase 1 (311 aa).

11–14 (SGNI) lines the NAD(+) pocket. Residue Cys-129 is the Acyl-thioester intermediate of the active site. Residues 161-169 (SAGPGTRAN) and Asn-288 contribute to the NAD(+) site.

It belongs to the acetaldehyde dehydrogenase family.

The enzyme catalyses acetaldehyde + NAD(+) + CoA = acetyl-CoA + NADH + H(+). The polypeptide is Acetaldehyde dehydrogenase 1 (Novosphingobium aromaticivorans (strain ATCC 700278 / DSM 12444 / CCUG 56034 / CIP 105152 / NBRC 16084 / F199)).